Here is a 72-residue protein sequence, read N- to C-terminus: Translation initiation factor IF-1 1 (72 aa).

The region spanning 1-72 (MSKDDVIQMA…TRARIIFRAK (72 aa)) is the S1-like domain.

The protein belongs to the IF-1 family. In terms of assembly, component of the 30S ribosomal translation pre-initiation complex which assembles on the 30S ribosome in the order IF-2 and IF-3, IF-1 and N-formylmethionyl-tRNA(fMet); mRNA recruitment can occur at any time during PIC assembly.

The protein resides in the cytoplasm. Its function is as follows. One of the essential components for the initiation of protein synthesis. Stabilizes the binding of IF-2 and IF-3 on the 30S subunit to which N-formylmethionyl-tRNA(fMet) subsequently binds. Helps modulate mRNA selection, yielding the 30S pre-initiation complex (PIC). Upon addition of the 50S ribosomal subunit IF-1, IF-2 and IF-3 are released leaving the mature 70S translation initiation complex. This is Translation initiation factor IF-1 1 from Polynucleobacter asymbioticus (strain DSM 18221 / CIP 109841 / QLW-P1DMWA-1) (Polynucleobacter necessarius subsp. asymbioticus).